The primary structure comprises 406 residues: Bifunctional enzyme IspD/IspF (406 aa).

Residues 1-247 (MSLIRVNGEA…ALFFNPAKDT (247 aa)) are 2-C-methyl-D-erythritol 4-phosphate cytidylyltransferase. The tract at residues 248 to 406 (FIGMGFDTHA…HVSMRYKQKL (159 aa)) is 2-C-methyl-D-erythritol 2,4-cyclodiphosphate synthase. Residues Asp254 and His256 each contribute to the a divalent metal cation site. 4-CDP-2-C-methyl-D-erythritol 2-phosphate-binding positions include 254-256 (DTH) and 280-281 (HS). His288 is a binding site for a divalent metal cation. 4-CDP-2-C-methyl-D-erythritol 2-phosphate is bound by residues 302-304 (DIG), 307-311 (FPDND), 378-381 (TTME), Phe385, and Lys388.

This sequence in the N-terminal section; belongs to the IspD/TarI cytidylyltransferase family. IspD subfamily. It in the C-terminal section; belongs to the IspF family. The cofactor is a divalent metal cation.

The enzyme catalyses 2-C-methyl-D-erythritol 4-phosphate + CTP + H(+) = 4-CDP-2-C-methyl-D-erythritol + diphosphate. It catalyses the reaction 4-CDP-2-C-methyl-D-erythritol 2-phosphate = 2-C-methyl-D-erythritol 2,4-cyclic diphosphate + CMP. It functions in the pathway isoprenoid biosynthesis; isopentenyl diphosphate biosynthesis via DXP pathway; isopentenyl diphosphate from 1-deoxy-D-xylulose 5-phosphate: step 2/6. Its pathway is isoprenoid biosynthesis; isopentenyl diphosphate biosynthesis via DXP pathway; isopentenyl diphosphate from 1-deoxy-D-xylulose 5-phosphate: step 4/6. Functionally, bifunctional enzyme that catalyzes the formation of 4-diphosphocytidyl-2-C-methyl-D-erythritol from CTP and 2-C-methyl-D-erythritol 4-phosphate (MEP) (IspD), and catalyzes the conversion of 4-diphosphocytidyl-2-C-methyl-D-erythritol 2-phosphate (CDP-ME2P) to 2-C-methyl-D-erythritol 2,4-cyclodiphosphate (ME-CPP) with a corresponding release of cytidine 5-monophosphate (CMP) (IspF). The chain is Bifunctional enzyme IspD/IspF from Helicobacter pylori (strain Shi470).